A 937-amino-acid polypeptide reads, in one-letter code: Ubiquitin carboxyl-terminal hydrolase 37 (937 aa).

The short motif at 38-40 (RDN) is the KEN box 1 element. Short sequence motifs (D-box) lie at residues 76-84 (RMTLTLKDS) and 101-110 (KEYLETVKLG). Polar residues predominate over residues 132 to 149 (TAQNDSGLSPSDKQSAPR). Disordered regions lie at residues 132-216 (TAQN…KAIT) and 232-258 (QSEE…SRTG). Basic and acidic residues predominate over residues 151-161 (SSLDSREDSTP). Positions 162–170 (RKPLGSPSR) match the D-box 3 motif. Positions 204 to 206 (KEN) match the KEN box 2 motif. The 590-residue stretch at 322–911 (QGFSNLGNTC…SGYIFFYMHK (590 aa)) folds into the USP domain. Cys-331 serves as the catalytic Nucleophile. Residues 609-625 (NSSTLRRASQRPESSGS) show a composition bias toward polar residues. Disordered stretches follow at residues 609–632 (NSST…DSDS) and 688–710 (TSLC…GDAD). Residues 672 to 691 (NDEEMLAAVLEMSRHDTSLC) form the UIM 1 domain. The short motif at 742-744 (KEN) is the KEN box 3 element. UIM domains are found at residues 766 to 785 (REEQ…QEAR) and 788 to 807 (REDD…FNNS). His-866 acts as the Proton acceptor in catalysis.

Belongs to the peptidase C19 family.

The catalysed reaction is Thiol-dependent hydrolysis of ester, thioester, amide, peptide and isopeptide bonds formed by the C-terminal Gly of ubiquitin (a 76-residue protein attached to proteins as an intracellular targeting signal).. Functionally, deubiquitinase that antagonizes the anaphase-promoting complex (APC/C) during G1/S transition by mediating deubiquitination of APC/C target proteins, thereby promoting S phase entry. Specifically mediates deubiquitination of 'Lys-11'-linked polyubiquitin chains, a specific ubiquitin-linkage type mediated by the APC/C complex. In Danio rerio (Zebrafish), this protein is Ubiquitin carboxyl-terminal hydrolase 37 (usp37).